We begin with the raw amino-acid sequence, 389 residues long: Leucine aminopeptidase 1 (389 aa).

The first 18 residues, 1–18 (MKSAALLLPLYAAAFAAA), serve as a signal peptide directing secretion. A propeptide spanning residues 19 to 89 (AFHHEHAQAV…TLKRRINAAS (71 aa)) is cleaved from the precursor. Asparagine 99 carries N-linked (GlcNAc...) asparagine glycosylation. 4 residues coordinate Zn(2+): histidine 188, aspartate 207, glutamate 246, and aspartate 273. A disulfide bridge connects residues cysteine 322 and cysteine 326. Histidine 355 contacts Zn(2+).

This sequence belongs to the peptidase M28 family. M28E subfamily. Monomer. Requires Zn(2+) as cofactor.

Its subcellular location is the secreted. Extracellular aminopeptidase that allows assimilation of proteinaceous substrates. The chain is Leucine aminopeptidase 1 (lap1) from Pyrenophora teres f. teres (strain 0-1) (Barley net blotch fungus).